Here is a 179-residue protein sequence, read N- to C-terminus: MKGGKRVQLTRPNRINSEIRAIKVRLTGVEGDQIGIVNLREALKKSEELGLDLVEISPNAEPPVCRIMDYGKFLYEKSKSSKEQKKKQKVIHIKEIKFRPGTDEGDYQVKLRNLIRFLEDGDKAKITLRFRGREMAHQKIGVDVLNRVKNDLIELATVEYFPSKIEGRQMIMILAPKKK.

This sequence belongs to the IF-3 family. Monomer.

Its subcellular location is the cytoplasm. In terms of biological role, IF-3 binds to the 30S ribosomal subunit and shifts the equilibrium between 70S ribosomes and their 50S and 30S subunits in favor of the free subunits, thus enhancing the availability of 30S subunits on which protein synthesis initiation begins. The chain is Translation initiation factor IF-3 from Buchnera aphidicola subsp. Acyrthosiphon pisum (strain 5A).